The primary structure comprises 155 residues: Small ribosomal subunit protein uS7 (155 aa).

It belongs to the universal ribosomal protein uS7 family. Part of the 30S ribosomal subunit. Contacts proteins S9 and S11.

Functionally, one of the primary rRNA binding proteins, it binds directly to 16S rRNA where it nucleates assembly of the head domain of the 30S subunit. Is located at the subunit interface close to the decoding center, probably blocks exit of the E-site tRNA. The sequence is that of Small ribosomal subunit protein uS7 from Mycoplasma genitalium (strain ATCC 33530 / DSM 19775 / NCTC 10195 / G37) (Mycoplasmoides genitalium).